The primary structure comprises 468 residues: Gasdermin-C (468 aa).

A triggers pyroptosis region spans residues 1–230 (MSYTFDWLSK…CVILTSANTK (230 aa)).

The protein belongs to the gasdermin family. As to quaternary structure, homooligomer; homooligomeric ring-shaped pore complex containing 27-28 subunits when inserted in the membrane. In terms of processing, cleavage by CASP8 relieves autoinhibition by releasing the N-terminal moiety (Gasdermin-C, N-terminal) that initiates pyroptosis. Post-translationally, palmitoylated.

The protein resides in the cytoplasm. It is found in the cytosol. It localises to the cell membrane. Its activity is regulated as follows. The full-length protein before cleavage is inactive: intramolecular interactions between N- and C-terminal domains mediate autoinhibition in the absence of activation signal. The intrinsic pyroptosis-inducing activity is carried by the released N-terminal moiety (Gasdermin-C, N-terminal) following cleavage by caspase CASP8. Its function is as follows. This form constitutes the precursor of the pore-forming protein: upon cleavage, the released N-terminal moiety (Gasdermin-C, N-terminal) binds to membranes and forms pores, triggering pyroptosis. Pore-forming protein that causes membrane permeabilization and pyroptosis. Produced by the cleavage of gasdermin-C by caspase CASP8 in response to death signals. After cleavage, moves to the plasma membrane where it strongly binds to membrane inner leaflet lipids. Homooligomerizes within the membrane and forms pores of 10-15 nanometers (nm) of inner diameter, triggering pyroptosis. The chain is Gasdermin-C from Mus musculus (Mouse).